Reading from the N-terminus, the 410-residue chain is Exopolygalacturonase (410 aa).

The first 22 residues, Met1–Gly22, serve as a signal peptide directing secretion. Asn89 carries N-linked (GlcNAc...) asparagine glycosylation. PbH1 repeat units follow at residues Cys192–Asp218, Ser219–Pro240, Thr242–Ser262, Val272–Ala293, and Ala337–Asp377. The active-site Proton donor is the Asp233. Residues Cys235 and Cys252 are joined by a disulfide bond. Asn246 carries an N-linked (GlcNAc...) asparagine glycan. His256 is a catalytic residue. An N-linked (GlcNAc...) asparagine glycan is attached at Asn349. A disulfide bridge connects residues Cys364 and Cys370. A glycan (N-linked (GlcNAc...) asparagine) is linked at Asn387. Cys393 and Cys409 are disulfide-bonded.

Belongs to the glycosyl hydrolase 28 family. Pollen.

The protein localises to the secreted. It is found in the cell wall. The enzyme catalyses [(1-&gt;4)-alpha-D-galacturonosyl](n) + H2O = alpha-D-galacturonate + [(1-&gt;4)-alpha-D-galacturonosyl](n-1). In terms of biological role, may function in depolymerizing pectin during pollen development, germination, and tube growth. Acts as an exo-polygalacturonase. The chain is Exopolygalacturonase (PG1) from Zea mays (Maize).